The sequence spans 465 residues: Ribulose bisphosphate carboxylase large chain (465 aa).

An N6,N6,N6-trimethyllysine modification is found at lysine 4. Residues asparagine 113 and threonine 163 each coordinate substrate. Lysine 165 serves as the catalytic Proton acceptor. Position 167 (lysine 167) interacts with substrate. Positions 191, 193, and 194 each coordinate Mg(2+). Lysine 191 is modified (N6-carboxylysine). The active-site Proton acceptor is the histidine 284. The substrate site is built by arginine 285, histidine 317, and serine 369.

It belongs to the RuBisCO large chain family. Type I subfamily. Heterohexadecamer of 8 large chains and 8 small chains; disulfide-linked. The disulfide link is formed within the large subunit homodimers. The cofactor is Mg(2+). In terms of processing, the disulfide bond which can form in the large chain dimeric partners within the hexadecamer appears to be associated with oxidative stress and protein turnover.

The protein resides in the plastid. It localises to the chloroplast. It catalyses the reaction 2 (2R)-3-phosphoglycerate + 2 H(+) = D-ribulose 1,5-bisphosphate + CO2 + H2O. The enzyme catalyses D-ribulose 1,5-bisphosphate + O2 = 2-phosphoglycolate + (2R)-3-phosphoglycerate + 2 H(+). In terms of biological role, ruBisCO catalyzes two reactions: the carboxylation of D-ribulose 1,5-bisphosphate, the primary event in carbon dioxide fixation, as well as the oxidative fragmentation of the pentose substrate in the photorespiration process. Both reactions occur simultaneously and in competition at the same active site. The chain is Ribulose bisphosphate carboxylase large chain from Epacris sp.